Consider the following 605-residue polypeptide: Heparan-sulfate 6-O-sulfotransferase 2 (605 aa).

Residues 1-4 (MALP) are Cytoplasmic-facing. The disordered stretch occupies residues 1–66 (MALPACAVRE…GVSHGFHTRP (66 aa)). The helical; Signal-anchor for type II membrane protein transmembrane segment at 5-27 (ACAVREFEPPRQPERGAPVRTTC) threads the bilayer. The segment covering 9 to 18 (REFEPPRQPE) has biased composition (basic and acidic residues). Topologically, residues 28–605 (PRRHSRVEAE…DYIGSVEKWR (578 aa)) are lumenal. N-linked (GlcNAc...) asparagine glycosylation occurs at N209. 233–241 (HIQKTGGTT) provides a ligand contact to 3'-phosphoadenylyl sulfate. Substrate-binding positions include 263 to 264 (KK), R280, W285, and H290. The active-site Proton acceptor is the H290. 3'-phosphoadenylyl sulfate is bound by residues R325 and S333. Substrate-binding residues include H337 and W344. A glycan (N-linked (GlcNAc...) asparagine) is linked at N404. 457-459 (TQY) is a 3'-phosphoadenylyl sulfate binding site. N460 is a glycosylation site (N-linked (GlcNAc...) asparagine). 463-464 (RA) is a binding site for 3'-phosphoadenylyl sulfate. Positions 530-605 (FQSQGQGQSQ…DYIGSVEKWR (76 aa)) are disordered. Over residues 531-571 (QSQGQGQSQNPNQNQSQNPNPNANQNLTQNLMQNLTQSLSQ) the composition is skewed to low complexity. N-linked (GlcNAc...) asparagine glycosylation is found at N544, N556, N564, N589, and N592. The span at 579 to 597 (KQNSGKEQNDNTSNGTNDY) shows a compositional bias: polar residues.

This sequence belongs to the sulfotransferase 6 family.

The protein resides in the membrane. The enzyme catalyses alpha-D-glucosaminyl-[heparan sulfate](n) + 3'-phosphoadenylyl sulfate = 6-sulfo-alpha-D-glucosaminyl-[heparan sulfate](n) + adenosine 3',5'-bisphosphate + H(+). 6-O-sulfation enzyme which catalyzes the transfer of sulfate from 3'-phosphoadenosine 5'-phosphosulfate (PAPS) to position 6 of the N-sulfoglucosamine residue (GlcNS) of heparan sulfate. The polypeptide is Heparan-sulfate 6-O-sulfotransferase 2 (Homo sapiens (Human)).